The primary structure comprises 321 residues: ATP phosphoribosyltransferase regulatory subunit (321 aa).

Belongs to the class-II aminoacyl-tRNA synthetase family. HisZ subfamily. In terms of assembly, heteromultimer composed of HisG and HisZ subunits.

It is found in the cytoplasm. It participates in amino-acid biosynthesis; L-histidine biosynthesis; L-histidine from 5-phospho-alpha-D-ribose 1-diphosphate: step 1/9. In terms of biological role, required for the first step of histidine biosynthesis. May allow the feedback regulation of ATP phosphoribosyltransferase activity by histidine. This is ATP phosphoribosyltransferase regulatory subunit from Thiobacillus denitrificans (strain ATCC 25259 / T1).